The following is a 486-amino-acid chain: D-mannonate oxidoreductase (486 aa).

25-36 serves as a coordination point for NAD(+); that stretch reads IVHLGCGAFHRA.

The protein belongs to the mannitol dehydrogenase family. UxuB subfamily.

It carries out the reaction D-mannonate + NAD(+) = keto-D-fructuronate + NADH + H(+). The protein operates within carbohydrate metabolism; pentose and glucuronate interconversion. This Escherichia coli (strain K12) protein is D-mannonate oxidoreductase (uxuB).